Consider the following 98-residue polypeptide: Integration host factor subunit beta (98 aa).

Belongs to the bacterial histone-like protein family. Heterodimer of an alpha and a beta chain.

Functionally, this protein is one of the two subunits of integration host factor, a specific DNA-binding protein that functions in genetic recombination as well as in transcriptional and translational control. The chain is Integration host factor subunit beta from Teredinibacter turnerae (strain ATCC 39867 / T7901).